The sequence spans 498 residues: Aspartyl aminopeptidase (498 aa).

Zn(2+) is bound at residue His-91. Substrate is bound at residue His-166. Asp-274 is a binding site for Zn(2+). Position 311 (Glu-311) interacts with substrate. Residues Glu-312 and Asp-363 each coordinate Zn(2+). Asp-363, His-366, Lys-391, and Tyr-398 together coordinate substrate. His-463 is a Zn(2+) binding site.

The protein belongs to the peptidase M18 family. As to quaternary structure, tetrahedron-shaped homododecamer built from six homodimers. Zn(2+) is required as a cofactor. The N-terminus is blocked.

It carries out the reaction Release of an N-terminal aspartate or glutamate from a peptide, with a preference for aspartate.. With respect to regulation, inhibited by zinc. Stimulated by calcium and bacitracin. This Aspergillus oryzae (strain ATCC 42149 / RIB 40) (Yellow koji mold) protein is Aspartyl aminopeptidase (dapA).